Consider the following 900-residue polypeptide: Protein translocase subunit SecA (900 aa).

Residues Gln-87, Gly-105 to Thr-109, and Asp-512 contribute to the ATP site. Residues Glu-849–Lys-900 form a disordered region. Zn(2+) is bound by residues Cys-883, Cys-885, Cys-894, and His-895. Residues Lys-889–Lys-900 are compositionally biased toward basic residues.

This sequence belongs to the SecA family. In terms of assembly, monomer and homodimer. Part of the essential Sec protein translocation apparatus which comprises SecA, SecYEG and auxiliary proteins SecDF-YajC and YidC. Requires Zn(2+) as cofactor.

The protein localises to the cell inner membrane. It is found in the cytoplasm. It carries out the reaction ATP + H2O + cellular proteinSide 1 = ADP + phosphate + cellular proteinSide 2.. Part of the Sec protein translocase complex. Interacts with the SecYEG preprotein conducting channel. Has a central role in coupling the hydrolysis of ATP to the transfer of proteins into and across the cell membrane, serving both as a receptor for the preprotein-SecB complex and as an ATP-driven molecular motor driving the stepwise translocation of polypeptide chains across the membrane. This Pectobacterium atrosepticum (strain SCRI 1043 / ATCC BAA-672) (Erwinia carotovora subsp. atroseptica) protein is Protein translocase subunit SecA.